Here is a 399-residue protein sequence, read N- to C-terminus: Elongation factor Tu (399 aa).

Residues 10-204 (KPHVNIGTIG…AVDASIPEPE (195 aa)) enclose the tr-type G domain. The segment at 19–26 (GHVDHGKT) is G1. 19 to 26 (GHVDHGKT) provides a ligand contact to GTP. Thr26 is a Mg(2+) binding site. Positions 60–64 (GITIN) are G2. The segment at 81-84 (DCPG) is G3. GTP is bound by residues 81 to 85 (DCPGH) and 136 to 139 (NKCD). The tract at residues 136–139 (NKCD) is G4. The segment at 174–176 (SGL) is G5.

This sequence belongs to the TRAFAC class translation factor GTPase superfamily. Classic translation factor GTPase family. EF-Tu/EF-1A subfamily. As to quaternary structure, monomer.

The protein localises to the cytoplasm. The catalysed reaction is GTP + H2O = GDP + phosphate + H(+). Functionally, GTP hydrolase that promotes the GTP-dependent binding of aminoacyl-tRNA to the A-site of ribosomes during protein biosynthesis. The protein is Elongation factor Tu of Prochlorococcus marinus (strain MIT 9515).